An 887-amino-acid chain; its full sequence is MAELPQSRINERNITSEMRESFLDYAMSVIVARALPDVRDGLKPVHRRILYGLNEQGMTPDKSYKKSARIVGDVMGKYHPHGDSSIYEAMVRMAQDFSYRYPLVDGQGNFGSMDGDGAAAMRYTEARMTKITLELLRDINKDTIDFIDNYDGNEREPSVLPARFPNLLANGASGIAVGMATNIPPHNLTELINGVLSLSKNPDISIAELMEDIEGPDFPTAGLILGKSGIRRAYETGRGSIQMRSRAVIEERGGGRQRIVVTEIPFQVNKARMIEKIAELVRDKKIDGITDLRDETSLRTGVRVVIDVRKDANASVILNNLYKQTPLQTSFGVNMIALVNGRPKLINLKEALVHYLEHQKTVVRRRTQYNLRKAKDRAHILEGLRIALDHIDEIISTIRESDTDKVAMESLQQRFKLSEKQAQAILDMRLRRLTGLERDKIEAEYNELLNYISELEAILADEEVLLQLVRDELTEIRDRFGDDRRTEIQLGGFENLEDEDLIPEEQIVITLSHNNYIKRLPVSTYRAQNRGGRGVQGMNTLEEDFVSQLVTLSTHDHVLFFTNKGRVYKLKGYEVPELSRQSKGIPVVNAIELENDEVISTMIAVKDLESEDNFLVFATKRGVVKRSALSNFSRINRNGKIAISFREDDELIAVRLTSGQEDILIGTSHASLIRFPESTLRPLGRTATGVKGITLREGDEVVGLDVAHANSVDEVLVVTENGYGKRTPVNDYRLSNRGGKGIKTATITERNGNVVCITTVTGEEDLMIVTNAGVIIRLDVADISQNGRAAQGVRLIRLGDDQFVSTVAKVKEDAEDETNEDEQSTSTVSEDGTEQQREAVVNDETPGNAIHTEVIDSEENDEDGRIEVRQDFMDRVEEDIQQSSDEE.

In terms of domain architecture, Topo IIA-type catalytic spans 35 to 501 (LPDVRDGLKP…GFENLEDEDL (467 aa)). The O-(5'-phospho-DNA)-tyrosine intermediate role is filled by tyrosine 123. The short motif at 528-534 (QNRGGRG) is the GyrA-box element. The interval 811–864 (KEDAEDETNEDEQSTSTVSEDGTEQQREAVVNDETPGNAIHTEVIDSEENDEDG) is disordered. A compositionally biased stretch (acidic residues) spans 813–823 (DAEDETNEDEQ).

The protein belongs to the type II topoisomerase GyrA/ParC subunit family. As to quaternary structure, heterotetramer, composed of two GyrA and two GyrB chains. In the heterotetramer, GyrA contains the active site tyrosine that forms a transient covalent intermediate with DNA, while GyrB binds cofactors and catalyzes ATP hydrolysis.

It localises to the cytoplasm. It carries out the reaction ATP-dependent breakage, passage and rejoining of double-stranded DNA.. Its function is as follows. A type II topoisomerase that negatively supercoils closed circular double-stranded (ds) DNA in an ATP-dependent manner to modulate DNA topology and maintain chromosomes in an underwound state. Negative supercoiling favors strand separation, and DNA replication, transcription, recombination and repair, all of which involve strand separation. Also able to catalyze the interconversion of other topological isomers of dsDNA rings, including catenanes and knotted rings. Type II topoisomerases break and join 2 DNA strands simultaneously in an ATP-dependent manner. The protein is DNA gyrase subunit A of Staphylococcus aureus (strain COL).